We begin with the raw amino-acid sequence, 107 residues long: MKRCRSEHVPSRLPRKKCKNHLDMRSFLSLFASKKSNAHDASSIVLNEKVNFVTDNDHLPSSTGVCEFCDNVLYLSTCDRCQRNICRNCSTLMYFKENTVARCLDCL.

This is an uncharacterized protein from Schizosaccharomyces pombe (strain 972 / ATCC 24843) (Fission yeast).